The following is a 254-amino-acid chain: MKSFIFRQNPRKQQQEQNNLVDYSDSDDDEECNDDIFVNNEIIINVSEKSSKDYGLFIWDGSLVLSWYLFTLTKNNPQFWNGKNVLELNAGVALPSILLSKLGVNKIIITDRIDGFIEIQNNIIDNLNLNGFNINNNNNINDNKIFIEPLSWGNFEKFSNQLTSSSIDYLITSDCFYDNTKNYDDIFATWYYFLLKNDKLVILLTYQVRCNEKTIFNYLKKWKLKSEILSIKDISIPNYNIDSEIILIKITKNQ.

Residues 1 to 27 (MKSFIFRQNPRKQQQEQNNLVDYSDSD) form a disordered region. The segment covering 11-21 (RKQQQEQNNLV) has biased composition (polar residues).

It belongs to the methyltransferase superfamily. METTL23 family.

Functionally, probable methyltransferase. The protein is Methyltransferase-like protein 23 of Dictyostelium discoideum (Social amoeba).